Consider the following 1417-residue polypeptide: Cytoadherence-linked asexual protein 3.1 (1417 aa).

The signal sequence occupies residues 1-24 (MVSFFKTPIFILIIFLYLNEKVIC). 4 cysteine pairs are disulfide-bonded: Cys-333–Cys-361, Cys-407–Cys-413, Cys-517–Cys-545, and Cys-521–Cys-542. The chain crosses the membrane as a helical span at residues 1204–1224 (LVNGFMYAFCFFAISQMYAYF). The tract at residues 1383-1417 (TYIDTEKMNEADSADSDDEKDSDTPDDELMISRFH) is disordered. Residues 1394–1411 (DSADSDDEKDSDTPDDEL) show a composition bias toward acidic residues.

Self-associates. Component of the RhopH complex. RhopH complex is at least composed of CLAG3.1/CLAG3.2, RhopH2 and RhopH3 with a 1:1:1 subunit stoichiometry. CLAG3.1/CLAG3.2 mediates subunit association through independent contacts with RhopH2 and RhopH3, which do not directly interact with one another. Interacts with RhopH2. Interacts with RhopH3.

Its subcellular location is the host cell membrane. It is found in the host cytoplasm. The protein localises to the cytoplasmic vesicle. The protein resides in the secretory vesicle. It localises to the rhoptry. Participates in the formation of new permeability pathways in Plasmodium-infected erythrocytes enabling the uptake of nutrients from the blood plasma. The protein is Cytoadherence-linked asexual protein 3.1 of Plasmodium falciparum (isolate 3D7).